Here is a 350-residue protein sequence, read N- to C-terminus: Adenine deaminase (350 aa).

Zn(2+)-binding residues include His-24, His-26, and His-207. Glu-210 functions as the Proton donor in the catalytic mechanism. Position 288 (Asp-288) interacts with Zn(2+). Asp-289 contacts substrate.

This sequence belongs to the metallo-dependent hydrolases superfamily. Adenosine and AMP deaminases family. Adenine deaminase type 2 subfamily. Zn(2+) serves as cofactor.

It carries out the reaction adenine + H2O + H(+) = hypoxanthine + NH4(+). In terms of biological role, catalyzes the hydrolytic deamination of adenine to hypoxanthine. Plays an important role in the purine salvage pathway and in nitrogen catabolism. In Paraburkholderia xenovorans (strain LB400), this protein is Adenine deaminase.